The chain runs to 415 residues: Probable N-acetyl-gamma-glutamyl-phosphate reductase, chloroplastic (415 aa).

The N-terminal 74 residues, Met-1 to Arg-74, are a transit peptide targeting the chloroplast. The tract at residues Val-48–Lys-68 is disordered. The span at Pro-56–Val-67 shows a compositional bias: polar residues. Cys-219 is an active-site residue.

It belongs to the NAGSA dehydrogenase family. Type 1 subfamily. In terms of assembly, homotetramer.

Its subcellular location is the plastid. The protein resides in the chloroplast. It carries out the reaction N-acetyl-L-glutamate 5-semialdehyde + phosphate + NADP(+) = N-acetyl-L-glutamyl 5-phosphate + NADPH + H(+). It participates in amino-acid biosynthesis; L-arginine biosynthesis; N(2)-acetyl-L-ornithine from L-glutamate: step 3/4. This chain is Probable N-acetyl-gamma-glutamyl-phosphate reductase, chloroplastic, found in Oryza sativa subsp. japonica (Rice).